The chain runs to 182 residues: UPF0397 protein VV2_1534 (182 aa).

Helical transmembrane passes span 8–28 (VVVIAIGAALYGIGGLPMFGI), 41–61 (AVLALFSVLFGPLVGFLVGFI), 72–92 (WGVWLTWVLGSGIVGLIIGLF), 110–130 (FSLFVVLALLGNVFGYGCSAF), and 146–166 (QLTIIASGNTVLIAIVGYFIL).

The protein belongs to the UPF0397 family.

The protein resides in the cell membrane. In Vibrio vulnificus (strain CMCP6), this protein is UPF0397 protein VV2_1534.